A 342-amino-acid chain; its full sequence is Ferredoxin--NADP reductase (342 aa).

C17, D36, Q44, Y49, V89, F124, D289, and T330 together coordinate FAD.

It belongs to the ferredoxin--NADP reductase type 2 family. As to quaternary structure, homodimer. Requires FAD as cofactor.

It carries out the reaction 2 reduced [2Fe-2S]-[ferredoxin] + NADP(+) + H(+) = 2 oxidized [2Fe-2S]-[ferredoxin] + NADPH. This Nitrobacter hamburgensis (strain DSM 10229 / NCIMB 13809 / X14) protein is Ferredoxin--NADP reductase.